We begin with the raw amino-acid sequence, 590 residues long: MHRYRTHTCGALRDSNIGETVRLSGWCHRIRDHGGVLFVDLRDHYGITQCVVDPDSKAFGLAEKLRSEWVVRMEGKVRRRPEGTDNAELPTGQVELYVADIEVLGPAAELPLPVFGEQEYPEDIRLKYRFLDLRREKLHQNIMTRGAIIDSMRRRMKEQGFFEFQTPILTASSPEGARDFLVPSRIHPGKFYALPQAPQQYKQLLMMSGFDRYFQIAPCFRDEDPRADRLPGEFYQLDVEMSFVEQEDVFAAMEPVITGVFEDFAKGKPVTKGWPRIPFAEALRKYGTDKPDLRNPIEMQDVSEHFRGSGFKVFARMLEDTKNQVWAIPAPGGGSRAFCDRMNSWAQGEGQPGLGYIMWREGGEGAGPLANNIGPERTAAIRTQLGTKEGDAAFFVAGDPEKFWKFAGLARTKVGEELNLIDKDRFALAWIVDFPMYEYNEDDKKVDFSHNPFSMPQGGLEALQTKDPLTIKAFQYDIACNGYEIASGGIRNHKPEAMVKAFEIAGYGEQEVVDRFGGMYRAFQYGAPPHGGMAAGVDRIVMLLCGTTNLREISLFPMNQQAMDLLMGAPSEATTKQLRELHIRTNLPNK.

Residue Glu-175 participates in L-aspartate binding. The interval 199-202 (QQYK) is aspartate. 2 residues coordinate L-aspartate: Arg-221 and His-450. 221-223 (RDE) serves as a coordination point for ATP. Glu-484 contributes to the ATP binding site. Arg-491 contacts L-aspartate. An ATP-binding site is contributed by 536 to 539 (GVDR).

The protein belongs to the class-II aminoacyl-tRNA synthetase family. Type 1 subfamily. In terms of assembly, homodimer.

It localises to the cytoplasm. It catalyses the reaction tRNA(Asx) + L-aspartate + ATP = L-aspartyl-tRNA(Asx) + AMP + diphosphate. Functionally, aspartyl-tRNA synthetase with relaxed tRNA specificity since it is able to aspartylate not only its cognate tRNA(Asp) but also tRNA(Asn). Reaction proceeds in two steps: L-aspartate is first activated by ATP to form Asp-AMP and then transferred to the acceptor end of tRNA(Asp/Asn). This is Aspartate--tRNA(Asp/Asn) ligase from Bradyrhizobium sp. (strain BTAi1 / ATCC BAA-1182).